The following is a 342-amino-acid chain: Glycerol-3-phosphate dehydrogenase [NAD(P)+] (342 aa).

NADPH-binding residues include Ser-13, Trp-14, and Lys-108. Sn-glycerol 3-phosphate is bound by residues Lys-108, Gly-139, and Ser-141. An NADPH-binding site is contributed by Ala-143. Sn-glycerol 3-phosphate contacts are provided by Lys-194, Asp-247, Ser-257, Arg-258, and Asn-259. Lys-194 acts as the Proton acceptor in catalysis. Arg-258 lines the NADPH pocket. NADPH-binding residues include Val-282 and Glu-284.

The protein belongs to the NAD-dependent glycerol-3-phosphate dehydrogenase family.

The protein localises to the cytoplasm. The enzyme catalyses sn-glycerol 3-phosphate + NAD(+) = dihydroxyacetone phosphate + NADH + H(+). The catalysed reaction is sn-glycerol 3-phosphate + NADP(+) = dihydroxyacetone phosphate + NADPH + H(+). Its pathway is membrane lipid metabolism; glycerophospholipid metabolism. Its function is as follows. Catalyzes the reduction of the glycolytic intermediate dihydroxyacetone phosphate (DHAP) to sn-glycerol 3-phosphate (G3P), the key precursor for phospholipid synthesis. The sequence is that of Glycerol-3-phosphate dehydrogenase [NAD(P)+] from Lactococcus lactis subsp. cremoris (strain MG1363).